The primary structure comprises 242 residues: DNA repair protein RecO (242 aa).

This sequence belongs to the RecO family.

Functionally, involved in DNA repair and RecF pathway recombination. This chain is DNA repair protein RecO, found in Bacteroides fragilis (strain ATCC 25285 / DSM 2151 / CCUG 4856 / JCM 11019 / LMG 10263 / NCTC 9343 / Onslow / VPI 2553 / EN-2).